The primary structure comprises 610 residues: UvrABC system protein C (610 aa).

The 79-residue stretch at 16–94 (SQPGVYRMYD…IKLYQPRYNV (79 aa)) folds into the GIY-YIG domain. In terms of domain architecture, UVR spans 204-239 (DQVLTQLISRMETASQNLEFEEAARIRDQIQAVRRV).

Belongs to the UvrC family. In terms of assembly, interacts with UvrB in an incision complex.

The protein resides in the cytoplasm. The UvrABC repair system catalyzes the recognition and processing of DNA lesions. UvrC both incises the 5' and 3' sides of the lesion. The N-terminal half is responsible for the 3' incision and the C-terminal half is responsible for the 5' incision. The chain is UvrABC system protein C from Escherichia coli (strain SMS-3-5 / SECEC).